We begin with the raw amino-acid sequence, 371 residues long: tRNA/tmRNA (uracil-C(5))-methyltransferase (371 aa).

Gln194, Tyr223, Asn228, Glu244, and Asp304 together coordinate S-adenosyl-L-methionine. The Nucleophile role is filled by Cys329. Glu363 (proton acceptor) is an active-site residue.

The protein belongs to the class I-like SAM-binding methyltransferase superfamily. RNA M5U methyltransferase family. TrmA subfamily.

The enzyme catalyses uridine(54) in tRNA + S-adenosyl-L-methionine = 5-methyluridine(54) in tRNA + S-adenosyl-L-homocysteine + H(+). It carries out the reaction uridine(341) in tmRNA + S-adenosyl-L-methionine = 5-methyluridine(341) in tmRNA + S-adenosyl-L-homocysteine + H(+). In terms of biological role, dual-specificity methyltransferase that catalyzes the formation of 5-methyluridine at position 54 (m5U54) in all tRNAs, and that of position 341 (m5U341) in tmRNA (transfer-mRNA). In Sulfurovum sp. (strain NBC37-1), this protein is tRNA/tmRNA (uracil-C(5))-methyltransferase.